The primary structure comprises 531 residues: Chaperonin GroEL, chloroplastic (531 aa).

Residues 30 to 33 (TLGP), 87 to 91 (DGTTT), G415, 481 to 483 (NAA), and D497 each bind ATP.

It belongs to the chaperonin (HSP60) family. As to quaternary structure, forms a cylinder of 14 subunits composed of two heptameric rings stacked back-to-back. Interacts with the co-chaperonin GroES.

The protein resides in the plastid. The protein localises to the chloroplast. The catalysed reaction is ATP + H2O + a folded polypeptide = ADP + phosphate + an unfolded polypeptide.. Together with its co-chaperonin GroES, plays an essential role in assisting protein folding. The GroEL-GroES system forms a nano-cage that allows encapsulation of the non-native substrate proteins and provides a physical environment optimized to promote and accelerate protein folding. In Emiliania huxleyi (Coccolithophore), this protein is Chaperonin GroEL, chloroplastic.